A 199-amino-acid polypeptide reads, in one-letter code: Recombination protein RecR (199 aa).

A C4-type zinc finger spans residues 56 to 71; that stretch reads CSICFNWSAEDPCEIC. Residues 79 to 174 enclose the Toprim domain; sequence STWCVVADVK…GLRMTRLAFG (96 aa).

Belongs to the RecR family.

Its function is as follows. May play a role in DNA repair. It seems to be involved in an RecBC-independent recombinational process of DNA repair. It may act with RecF and RecO. In Synechococcus sp. (strain JA-3-3Ab) (Cyanobacteria bacterium Yellowstone A-Prime), this protein is Recombination protein RecR.